A 330-amino-acid chain; its full sequence is Tryptophan--tRNA ligase (330 aa).

Residues 10-12 (QPS) and 18-19 (GN) contribute to the ATP site. The 'HIGH' region motif lies at 11 to 19 (PSGTLTLGN). L-tryptophan is bound at residue Asp133. ATP contacts are provided by residues 145 to 147 (GED), Ile184, and 193 to 197 (KMSKS). A 'KMSKS' region motif is present at residues 193 to 197 (KMSKS).

Belongs to the class-I aminoacyl-tRNA synthetase family. As to quaternary structure, homodimer.

Its subcellular location is the cytoplasm. The catalysed reaction is tRNA(Trp) + L-tryptophan + ATP = L-tryptophyl-tRNA(Trp) + AMP + diphosphate + H(+). Its function is as follows. Catalyzes the attachment of tryptophan to tRNA(Trp). The polypeptide is Tryptophan--tRNA ligase (Halalkalibacterium halodurans (strain ATCC BAA-125 / DSM 18197 / FERM 7344 / JCM 9153 / C-125) (Bacillus halodurans)).